A 406-amino-acid chain; its full sequence is Phosphopentomutase (406 aa).

Mn(2+) is bound by residues Asp10, Asp305, His310, Asp346, His347, and His358.

This sequence belongs to the phosphopentomutase family. It depends on Mn(2+) as a cofactor.

The protein localises to the cytoplasm. The catalysed reaction is 2-deoxy-alpha-D-ribose 1-phosphate = 2-deoxy-D-ribose 5-phosphate. The enzyme catalyses alpha-D-ribose 1-phosphate = D-ribose 5-phosphate. It functions in the pathway carbohydrate degradation; 2-deoxy-D-ribose 1-phosphate degradation; D-glyceraldehyde 3-phosphate and acetaldehyde from 2-deoxy-alpha-D-ribose 1-phosphate: step 1/2. Functionally, isomerase that catalyzes the conversion of deoxy-ribose 1-phosphate (dRib-1-P) and ribose 1-phosphate (Rib-1-P) to deoxy-ribose 5-phosphate (dRib-5-P) and ribose 5-phosphate (Rib-5-P), respectively. This Sinorhizobium fredii (strain NBRC 101917 / NGR234) protein is Phosphopentomutase.